The sequence spans 123 residues: UPF0102 protein CLD_2200 (123 aa).

It belongs to the UPF0102 family.

The protein is UPF0102 protein CLD_2200 of Clostridium botulinum (strain Okra / Type B1).